The chain runs to 142 residues: Large ribosomal subunit protein uL13 (142 aa).

Belongs to the universal ribosomal protein uL13 family. Part of the 50S ribosomal subunit.

In terms of biological role, this protein is one of the early assembly proteins of the 50S ribosomal subunit, although it is not seen to bind rRNA by itself. It is important during the early stages of 50S assembly. This Klebsiella pneumoniae (strain 342) protein is Large ribosomal subunit protein uL13.